Consider the following 306-residue polypeptide: Agmatinase (306 aa).

Residues histidine 126, aspartate 149, histidine 151, aspartate 153, aspartate 230, and aspartate 232 each coordinate Mn(2+).

It belongs to the arginase family. Agmatinase subfamily. Requires Mn(2+) as cofactor.

The catalysed reaction is agmatine + H2O = urea + putrescine. The protein operates within amine and polyamine biosynthesis; putrescine biosynthesis via agmatine pathway; putrescine from agmatine: step 1/1. Catalyzes the formation of putrescine from agmatine. The sequence is that of Agmatinase from Shigella sonnei (strain Ss046).